Consider the following 252-residue polypeptide: E3 ubiquitin-protein ligase MARCHF3 (252 aa).

Residues 62–122 (SSFNDHPMCR…ELCHFRFSVE (61 aa)) form an RING-CH-type zinc finger. Zn(2+)-binding residues include C70, C73, C86, C88, H96, C99, C112, and C115. The next 2 helical transmembrane spans lie at 144-164 (LFGD…SGWL) and 181-201 (AVGL…WTLV).

It localises to the cytoplasmic vesicle membrane. The protein localises to the early endosome membrane. The enzyme catalyses S-ubiquitinyl-[E2 ubiquitin-conjugating enzyme]-L-cysteine + [acceptor protein]-L-lysine = [E2 ubiquitin-conjugating enzyme]-L-cysteine + N(6)-ubiquitinyl-[acceptor protein]-L-lysine.. It participates in protein modification; protein ubiquitination. E3 ubiquitin-protein ligase which may be involved in endosomal trafficking. E3 ubiquitin ligases accept ubiquitin from an E2 ubiquitin-conjugating enzyme in the form of a thioester and then directly transfer the ubiquitin to targeted substrates. This is E3 ubiquitin-protein ligase MARCHF3 (marchf3) from Xenopus laevis (African clawed frog).